Here is a 250-residue protein sequence, read N- to C-terminus: Aquaporin (250 aa).

Over 1–15 (MTRETLKTLQSTFGE) the chain is Cytoplasmic. Residues 16 to 36 (MVASFVFGFAVYSALLGSALT) traverse the membrane as a helical segment. At 37–42 (EQSAAR) the chain is on the extracellular side. Residues 43-63 (VIVGLTVGFSGICVIYSFCDV) form a helical membrane-spanning segment. Topologically, residues 64–86 (TVAHFNPAITLAAILTCKLGVLR) are cytoplasmic. An NPA motif is present at residues 69–71 (NPA). The chain crosses the membrane as a helical span at residues 87-107 (GIGYIVAQYIGFILAVCALLP). The Extracellular segment spans residues 108–133 (CSPVGYKETLNIIRPTPSPFGGDNLN). Residues 134 to 154 (VFFTEFFLTAILVHVAFATAV) form a helical membrane-spanning segment. Over 155 to 179 (NPYKPKTDTEGKFVDPDEEEPVDRR) the chain is Cytoplasmic. A helical transmembrane segment spans residues 180–200 (ITAPLCIGLTLGFLAFLGLAS). At 201–224 (SGGAFNPGLTLAPVIMSNTWNHFW) the chain is on the extracellular side. The NPG signature appears at 206–208 (NPG). A helical transmembrane segment spans residues 225–245 (AYFAGQYLGGFVGGLLQVLVL). The Cytoplasmic portion of the chain corresponds to 246-250 (YKLSF).

This sequence belongs to the MIP/aquaporin (TC 1.A.8) family.

Its subcellular location is the cell membrane. In terms of biological role, water channel required to facilitate the transport of water across membranes. Involved in osmotolerance. The polypeptide is Aquaporin (AQP) (Encephalitozoon cuniculi (strain GB-M1) (Microsporidian parasite)).